Here is a 486-residue protein sequence, read N- to C-terminus: MAINPLKILFVASEVEGLVKTGGLADVARALPLYLAQKGHDVRIILPFYKTIKRRDEARLIASRWLPTHPGLPDIGYRIYQMELEGVCVYLLDCPQYFDRPQLYAENNQAYGDNGERFAFFSAAALHACEQLDFAPEIVHCNDWHTGLLPLLLKTRHAHNPFFQHTRSVISIHNAAFQGVFGREQFWAMPEIADYEQRISYDYGHVNLLKCGVLYADKINAVSPNYASELLTHLGAHGMANIFQQRAADLRGILNGCDYKDWDPAFDDFLPATYDVDNLAGKRVCKQTLQQEAGLPVTDLPIYGMVCRLTEQKGVHLLLPVLDKFLHHKVQVVIVGSGDPSLAAQLQATAQRYPDKLAFLNTYDDRLAHLVEAGADFFLMPSLFEPCGLNQMYSLAYGTLPLVRAVGGLKDTVVDWDAEPEHATGFCFNDPTANILLDAMRRSLLYYLQDPERFAQVQRNAMNTRFNWPDSVTQYEQMYQDALARQ.

Lysine 20 serves as a coordination point for ADP-alpha-D-glucose.

The protein belongs to the glycosyltransferase 1 family. Bacterial/plant glycogen synthase subfamily.

It carries out the reaction [(1-&gt;4)-alpha-D-glucosyl](n) + ADP-alpha-D-glucose = [(1-&gt;4)-alpha-D-glucosyl](n+1) + ADP + H(+). It functions in the pathway glycan biosynthesis; glycogen biosynthesis. Synthesizes alpha-1,4-glucan chains using ADP-glucose. This is Glycogen synthase from Aeromonas salmonicida (strain A449).